A 126-amino-acid chain; its full sequence is uncharacterized protein (126 aa).

A helical membrane pass occupies residues Leu-5–Ser-25.

The protein localises to the membrane. This is an uncharacterized protein from Saccharomyces cerevisiae (strain ATCC 204508 / S288c) (Baker's yeast).